The primary structure comprises 492 residues: Cobyric acid synthase (492 aa).

Positions 253 to 441 (VLKVIAPVYP…LHGLFDTPQA (189 aa)) constitute a GATase cobBQ-type domain. The Nucleophile role is filled by Cys334. His433 is a catalytic residue.

Belongs to the CobB/CobQ family. CobQ subfamily.

It participates in cofactor biosynthesis; adenosylcobalamin biosynthesis. Functionally, catalyzes amidations at positions B, D, E, and G on adenosylcobyrinic A,C-diamide. NH(2) groups are provided by glutamine, and one molecule of ATP is hydrogenolyzed for each amidation. This chain is Cobyric acid synthase, found in Azoarcus sp. (strain BH72).